A 475-amino-acid polypeptide reads, in one-letter code: Ankyrin repeat, SAM and basic leucine zipper domain-containing protein 1 (475 aa).

Residues 1–25 are disordered; it reads MAASALRGLPVAGGGESSESEDDGW. 3 positions are modified to phosphoserine: S17, S18, and S20. ANK repeat units follow at residues 45–74, 78–107, 110–144, 148–177, 181–210, and 214–243; these read EKKEKFKKAMTIGDVSLVQELLDSGISVDS, YGWTPLMYAASVANAELVRVLLDRGANASF, DKQSILITACSAHGSEEQILKCVELLLSRNADPNV, RLMTPIMYAARDGHTQVVALLVAHGAEVNT, NGYTALTWAARQGHKNIVLKLLELGANKML, and DGKMPSEIAKRNKHHEIFNLLSFTLNPLEG. In terms of domain architecture, SAM spans 272–334; the sequence is SYTAFGDLEV…KILAALKELQ (63 aa).

As to quaternary structure, interacts with DDX4, PIWIL1, RANBP9 and TDRD1. Expressed exclusively in the testis and ovary and at higher levels in the adult testis compared with the adult ovary.

It is found in the cytoplasm. Its function is as follows. Plays a central role during spermatogenesis by repressing transposable elements and preventing their mobilization, which is essential for the germline integrity. Acts via the piRNA metabolic process, which mediates the repression of transposable elements during meiosis by forming complexes composed of piRNAs and Piwi proteins and governs the methylation and subsequent repression of transposons. Its association with pi-bodies suggests a participation in the primary piRNAs metabolic process. Required prior to the pachytene stage to facilitate the production of multiple types of piRNAs, including those associated with repeats involved in the regulation of retrotransposons. May act by mediating protein-protein interactions during germ cell maturation. This is Ankyrin repeat, SAM and basic leucine zipper domain-containing protein 1 from Homo sapiens (Human).